A 474-amino-acid polypeptide reads, in one-letter code: Glutamate--tRNA ligase (474 aa).

Positions Pro-9 to Gly-19 match the 'HIGH' region motif. A 'KMSKS' region motif is present at residues Lys-240–Arg-244. Position 243 (Lys-243) interacts with ATP.

It belongs to the class-I aminoacyl-tRNA synthetase family. Glutamate--tRNA ligase type 1 subfamily. As to quaternary structure, monomer.

It localises to the cytoplasm. The enzyme catalyses tRNA(Glu) + L-glutamate + ATP = L-glutamyl-tRNA(Glu) + AMP + diphosphate. In terms of biological role, catalyzes the attachment of glutamate to tRNA(Glu) in a two-step reaction: glutamate is first activated by ATP to form Glu-AMP and then transferred to the acceptor end of tRNA(Glu). The chain is Glutamate--tRNA ligase from Vibrio vulnificus (strain CMCP6).